The primary structure comprises 119 residues: Putative arsenical resistance operon repressor ArsR2 (119 aa).

The HTH arsR-type domain maps to 24 to 119; it reads VDSDAMATDL…TLDDLRGNHE (96 aa). A DNA-binding region (H-T-H motif) is located at residues 60-83; it reads VCDLEATVGVSQSAVSQALSRLYT.

Its function is as follows. Transcriptional repressor for the arsR2M operon. The sequence is that of Putative arsenical resistance operon repressor ArsR2 (arsR2) from Halobacterium salinarum (strain ATCC 700922 / JCM 11081 / NRC-1) (Halobacterium halobium).